A 302-amino-acid polypeptide reads, in one-letter code: Actin maturation protease (302 aa).

The interval 1 to 26 is disordered; the sequence is MPHTNEDPTAQQAGVILDPPPPLPPP. The segment at 85–205 is peptidase C39-like; it reads SLIQEGPQCG…WAVISGVLFG (121 aa). Cys-93 is a catalytic residue.

The protein belongs to the ACTMAP family.

It localises to the cytoplasm. The enzyme catalyses N-terminal N(alpha)-acetyl-L-methionyl-L-aspartyl-[protein] + H2O = N-terminal L-aspartyl-[protein] + N-acetyl-L-methionine. The catalysed reaction is N-terminal N(alpha)-acetyl-L-methionyl-L-glutamyl-[protein] + H2O = N-terminal L-glutamyl-[protein] + N-acetyl-L-methionine. It carries out the reaction N-terminal N(alpha)-acetyl-L-cysteinyl-L-aspartyl-[protein] + H2O = N-terminal L-aspartyl-[protein] + N-acetyl-L-cysteine. It catalyses the reaction N-terminal N(alpha)-acetyl-L-cysteinyl-L-glutamyl-[protein] + H2O = N-terminal L-glutamyl-[protein] + N-acetyl-L-cysteine. In terms of biological role, actin maturation protease that specifically mediates the cleavage of immature acetylated N-terminal actin, thereby contributing to actin maturation. Cleaves N-terminal acetylated methionine of immature cytoplasmic beta- and gamma-actin after translation. Cleaves N-terminal acetylated cysteine of muscle alpha-actin after canonical removal of N-terminal methionine. The polypeptide is Actin maturation protease (Xenopus tropicalis (Western clawed frog)).